The chain runs to 754 residues: Lysophospholipase 3 (754 aa).

Positions 1–19 (MKVNLKLIIGSILISQAQA) are cleaved as a signal peptide. Composition is skewed to low complexity over residues 25–40 (SSGS…SETG) and 50–88 (LFGS…SSNS). The interval 25–88 (SSGSSSSSDS…DSSLFSSSNS (64 aa)) is disordered. Residues asparagine 112, asparagine 156, asparagine 174, asparagine 317, asparagine 325, asparagine 354, asparagine 391, asparagine 423, asparagine 470, asparagine 510, asparagine 515, asparagine 560, asparagine 577, asparagine 597, asparagine 625, and asparagine 631 are each glycosylated (N-linked (GlcNAc...) asparagine). Residues 114 to 670 (TCPSKKTFIR…QEYCWTGGFK (557 aa)) enclose the PLA2c domain. The span at 687-721 (KTHTSGGTSSTTQQTSTTTGSSANGGSSSTGSSSS) shows a compositional bias: low complexity. The interval 687-727 (KTHTSGGTSSTTQQTSTTTGSSANGGSSSTGSSSSSKKKNG) is disordered.

The protein belongs to the lysophospholipase family.

It localises to the secreted. The enzyme catalyses a 1-acyl-sn-glycero-3-phosphocholine + H2O = sn-glycerol 3-phosphocholine + a fatty acid + H(+). In terms of biological role, catalyzes the release of fatty acids from lysophospholipids. Phospholipase B may well contribute to pathogenicity by abetting the fungus in damaging and traversing host cell membranes, processes which likely increase the rapidity of disseminated infection. This chain is Lysophospholipase 3 (PLB3), found in Candida albicans (Yeast).